Here is a 625-residue protein sequence, read N- to C-terminus: Chaperone protein HtpG (625 aa).

An a; substrate-binding region spans residues 1–337; it reads MSTNQETRGF…TNDLPLNVSR (337 aa). Residues 338 to 554 form a b region; it reads EILQENKITA…NDEMTTQMAK (217 aa). A c region spans residues 555 to 625; sequence LFAAMGQKAP…FIKRMNKLLG (71 aa).

It belongs to the heat shock protein 90 family. Homodimer.

The protein resides in the cytoplasm. Its function is as follows. Molecular chaperone. Has ATPase activity. This chain is Chaperone protein HtpG, found in Actinobacillus pleuropneumoniae serotype 3 (strain JL03).